The chain runs to 298 residues: uncharacterized protein (298 aa).

Active-site charge relay system residues include Thr43 and Tyr105. Tyr131 acts as the Proton donor in catalysis. Catalysis depends on Lys159, which acts as the Schiff-base intermediate with substrate.

The protein belongs to the DapA family. In terms of assembly, homotetramer.

The protein localises to the cytoplasm. This is an uncharacterized protein from Pyrococcus furiosus (strain ATCC 43587 / DSM 3638 / JCM 8422 / Vc1).